The chain runs to 83 residues: Small ribosomal subunit protein bS16 (83 aa).

Belongs to the bacterial ribosomal protein bS16 family.

This is Small ribosomal subunit protein bS16 from Pseudomonas aeruginosa (strain LESB58).